Reading from the N-terminus, the 281-residue chain is Transcription factor E2F6 (281 aa).

Residue Lys-9 forms a Glycyl lysine isopeptide (Lys-Gly) (interchain with G-Cter in SUMO2) linkage. The DNA-binding element occupies 50–129 (YVSMRKALKV…SKNHIRWIGS (80 aa)). A DEF box motif is present at residues 95-129 (KLGVRKRRVYDITNVLDGIDLVEKKSKNHIRWIGS). Residues 130-222 (DLSNFGAVPQ…PAPREDSITV (93 aa)) form a dimerization region. The segment at 143–164 (LQEELSDLSAMEDALDELIKDC) is leucine-zipper. Residues 173–281 (DDKENERLAY…QSEELLEVSN (109 aa)) form a transcription repression region. Residues 241–281 (GQTSNKRSEGVGTSSSESTHPEGPEEEENPQQSEELLEVSN) form a disordered region.

This sequence belongs to the E2F/DP family. Forms heterodimers with DP family members TFDP1 or TFDP2. Component of the DRTF1/E2F transcription factor complex. Part of the E2F6.com-1 complex in G0 phase composed of E2F6, MGA, MAX, TFDP1, CBX3, BAT8, EUHMTASE1, RING1, RNF2, MBLR, L3MBTL2 and YAF2. Component of some MLL1/MLL complex, at least composed of the core components KMT2A/MLL1, ASH2L, HCFC1/HCF1, WDR5 and RBBP5, as well as the facultative components BACC1, CHD8, E2F6, HSP70, INO80C, KANSL1, LAS1L, MAX, MCRS1, MGA, KAT8/MOF, PELP1, PHF20, PRP31, RING2, RUVB1/TIP49A, RUVB2/TIP49B, SENP3, TAF1, TAF4, TAF6, TAF7, TAF9 and TEX10. Expressed in all tissues examined. Highest levels in placenta, skeletal muscle, heart, ovary, kidney, small intestine and spleen.

The protein resides in the nucleus. In terms of biological role, inhibitor of E2F-dependent transcription. Binds DNA cooperatively with DP proteins through the E2 recognition site, 5'-TTTC[CG]CGC-3'. Has a preference for the 5'-TTTCCCGC-3' E2F recognition site. E2F6 lacks the transcriptional activation and pocket protein binding domains. Appears to regulate a subset of E2F-dependent genes whose products are required for entry into the cell cycle but not for normal cell cycle progression. Represses expression of some meiosis-specific genes, including SLC25A31/ANT4. May silence expression via the recruitment of a chromatin remodeling complex containing histone H3-K9 methyltransferase activity. Overexpression delays the exit of cells from the S-phase. The sequence is that of Transcription factor E2F6 from Homo sapiens (Human).